The following is a 207-amino-acid chain: Guanylate kinase (207 aa).

In terms of domain architecture, Guanylate kinase-like spans 10–187 (GFFIVLSAAS…AVERLQVIYQ (178 aa)). 17-24 (AASGTGKT) contributes to the ATP binding site.

It belongs to the guanylate kinase family.

Its subcellular location is the cytoplasm. It carries out the reaction GMP + ATP = GDP + ADP. Essential for recycling GMP and indirectly, cGMP. The protein is Guanylate kinase of Syntrophus aciditrophicus (strain SB).